Consider the following 397-residue polypeptide: Riboflavin biosynthesis protein RibBA (397 aa).

The DHBP synthase stretch occupies residues 1–199 (MFHRIEEALE…IEDLIAYRRH (199 aa)). D-ribulose 5-phosphate contacts are provided by residues 26-27 (RE), Asp31, 138-142 (RAGHT), and Glu162. Mg(2+) is bound at residue Glu27. His141 is a binding site for Mg(2+). The interval 200 to 397 (HETLVTREVE…VNKLGHLLNL (198 aa)) is GTP cyclohydrolase II. 250–254 (RVHSE) is a GTP binding site. Residues Cys255, Cys266, and Cys268 each contribute to the Zn(2+) site. Residues Gln271, 293 to 295 (EGR), and Thr315 each bind GTP. Asp327 (proton acceptor; for GTP cyclohydrolase activity) is an active-site residue. Arg329 acts as the Nucleophile; for GTP cyclohydrolase activity in catalysis. 2 residues coordinate GTP: Thr350 and Lys355.

The protein in the N-terminal section; belongs to the DHBP synthase family. In the C-terminal section; belongs to the GTP cyclohydrolase II family. Mg(2+) is required as a cofactor. It depends on Mn(2+) as a cofactor. The cofactor is Zn(2+).

It catalyses the reaction D-ribulose 5-phosphate = (2S)-2-hydroxy-3-oxobutyl phosphate + formate + H(+). It carries out the reaction GTP + 4 H2O = 2,5-diamino-6-hydroxy-4-(5-phosphoribosylamino)-pyrimidine + formate + 2 phosphate + 3 H(+). It participates in cofactor biosynthesis; riboflavin biosynthesis; 2-hydroxy-3-oxobutyl phosphate from D-ribulose 5-phosphate: step 1/1. It functions in the pathway cofactor biosynthesis; riboflavin biosynthesis; 5-amino-6-(D-ribitylamino)uracil from GTP: step 1/4. Catalyzes the conversion of D-ribulose 5-phosphate to formate and 3,4-dihydroxy-2-butanone 4-phosphate. Functionally, catalyzes the conversion of GTP to 2,5-diamino-6-ribosylamino-4(3H)-pyrimidinone 5'-phosphate (DARP), formate and pyrophosphate. The protein is Riboflavin biosynthesis protein RibBA of Bacillus cereus (strain ATCC 10987 / NRS 248).